The primary structure comprises 384 residues: Neuropeptide Y receptor type 1 (384 aa).

At 1-44 the chain is on the extracellular side; that stretch reads MNSTLFSQVENHSVHSNFSEKNAQLLAFENDDCHLPLAMIFTLA. N-linked (GlcNAc...) asparagine glycans are attached at residues Asn2, Asn11, and Asn17. The helical transmembrane segment at 45 to 65 threads the bilayer; that stretch reads LAYGAVIILGVSGNLALIIII. Over 66 to 76 the chain is Cytoplasmic; the sequence is LKQKEMRNVTN. Residues 77 to 97 traverse the membrane as a helical segment; it reads ILIVNLSFSDLLVAIMCLPFT. Topologically, residues 98 to 116 are extracellular; sequence FVYTLMDHWVFGEAMCKLN. Cys113 and Cys198 are oxidised to a cystine. A helical membrane pass occupies residues 117 to 137; that stretch reads PFVQCVSITVSIFSLVLIAVE. Residues 138-154 lie on the Cytoplasmic side of the membrane; sequence RHQLIINPRGWRPNNRH. Residues 155–175 traverse the membrane as a helical segment; sequence AYVGIAVIWVLAVASSLPFLI. Over 176–211 the chain is Extracellular; that stretch reads YQVMTDEPFQNVTLDAYKDKYVCFDQFPSDSHRLSY. A helical membrane pass occupies residues 212–232; sequence TTLLLVLQYFGPLCFIFICYF. Residues 233–260 lie on the Cytoplasmic side of the membrane; it reads KIYIRLKRRNNMMDKMRDNKYRSSETKR. Residues 261–281 traverse the membrane as a helical segment; that stretch reads INIMLLSIVVAFAVCWLPLTI. The Extracellular segment spans residues 282-299; that stretch reads FNTVFDWNHQIIATCNHN. A helical membrane pass occupies residues 300 to 320; sequence LLFLLCHLTAMISTCVNPIFY. Over 321–384 the chain is Cytoplasmic; the sequence is GFLNKNFQRD…INNNDDNEKI (64 aa). Cys338 carries S-palmitoyl cysteine lipidation. Ser368 carries the phosphoserine modification.

This sequence belongs to the G-protein coupled receptor 1 family.

Its subcellular location is the cell membrane. In terms of biological role, receptor for neuropeptide Y and peptide YY. The rank order of affinity of this receptor for pancreatic polypeptides is NPY &gt; [Pro-34] PYY, PYY and [Leu-31, Pro-34] NPY &gt; NPY (2-36) &gt; [Ile-31, Gln-34] PP and PYY (3-36) &gt; PP &gt; NPY free acid. The protein is Neuropeptide Y receptor type 1 (NPY1R) of Homo sapiens (Human).